The primary structure comprises 565 residues: Anaphase-promoting complex subunit 7 (565 aa).

TPR repeat units lie at residues 101 to 134 (EIEV…RQRT), 169 to 202 (LDAI…LDWL), 203 to 236 (SVWI…LRDN), 237 to 270 (VDLL…DPYL), 339 to 372 (VQAL…APCR), 373 to 406 (LDCY…LGAN), 407 to 439 (AQTL…AQRP), 442 to 474 (VKAV…NQSD), 475 to 508 (CVLH…DPND), and 509 to 531 (QKSL…TQEE). Lys-229 carries the post-translational modification N6-acetyllysine. The span at 513 to 523 (EGMQKMEKEES) shows a compositional bias: basic and acidic residues. The segment at 513-565 (EGMQKMEKEESPTDATQEEDVDDMEGSGEEGDLEGSDSEAAQWADQEQWFGMQ) is disordered. A compositionally biased stretch (acidic residues) spans 528–549 (TQEEDVDDMEGSGEEGDLEGSD).

The protein belongs to the APC7 family. In terms of assembly, V-shaped homodimer. The mammalian APC/C is composed at least of 14 distinct subunits ANAPC1, ANAPC2, CDC27/APC3, ANAPC4, ANAPC5, CDC16/APC6, ANAPC7, CDC23/APC8, ANAPC10, ANAPC11, CDC26/APC12, ANAPC13, ANAPC15 and ANAPC16 that assemble into a complex of at least 19 chains with a combined molecular mass of around 1.2 MDa; APC/C interacts with FZR1 and FBXO5.

The protein localises to the cytoplasm. It localises to the cytoskeleton. Its subcellular location is the nucleus. The protein resides in the spindle. Its pathway is protein modification; protein ubiquitination. Functionally, component of the anaphase promoting complex/cyclosome (APC/C), a cell cycle-regulated E3 ubiquitin ligase that controls progression through mitosis and the G1 phase of the cell cycle. The APC/C complex acts by mediating ubiquitination and subsequent degradation of target proteins: it mainly mediates the formation of 'Lys-11'-linked polyubiquitin chains and, to a lower extent, the formation of 'Lys-48'- and 'Lys-63'-linked polyubiquitin chains. The APC/C complex catalyzes assembly of branched 'Lys-11'-/'Lys-48'-linked branched ubiquitin chains on target proteins. APC7 is not required for the assembly of the APC/C complex, but has an enzyme-substrate adapter activity mediating the processive ubiquitination of specific substrates. Involved in brain development through the specific ubiquitination and clearance of MKI67 from constitutive heterochromatin after neuronal progenitors exit mitosis. This is Anaphase-promoting complex subunit 7 (Anapc7) from Mus musculus (Mouse).